Consider the following 1084-residue polypeptide: Transcription elongation factor SPT5 (1084 aa).

Residues 1 to 91 (MSDSEDSDFS…DDEYEDEDPW (91 aa)) are disordered. 3 stretches are compositionally biased toward acidic residues: residues 20–32 (AEEV…EEEQ), 41–62 (AEEE…EEDD), and 77–91 (DEAD…EDPW). An interaction with SUPT4H1 region spans residues 175-269 (DPNLWTVKCK…TDVLKVVKEV (95 aa)). KOW domains follow at residues 272 to 305 (LKPK…ISLK), 419 to 450 (LQAG…ITIM), 471 to 502 (FRMG…VILF), and 593 to 626 (IHVK…LHCK). Residues 312–419 (LDRIKARMSM…TTGKEREHNL (108 aa)) are interaction with RNA polymerase II. Ser-665 is subject to Phosphoserine. Positions 667 to 700 (RISSPMHPGGGGQPQRGGGGGGGGGMGRGRGRRD) are disordered. Gly residues predominate over residues 674–694 (PGGGGQPQRGGGGGGGGGMGR). Positions 702 to 735 (DLIGQTVRISQGPYKGYIGVVKDATESTARVELH) constitute a KOW 5 domain. The disordered stretch occupies residues 748-973 (LTTVGGKERQ…HTPGSNIDQA (226 aa)). The CTR1-1; approximate repeat unit spans residues 758-763 (GRSSTH). Residues 758–815 (GRSSTHLRTPMYGSQTPIYGTGSRTPMYGSQTPLHDGSRTPHYGSQTPLHDGSRTPGQ) form an 8 X 7 AA approximate tandem repeats of G-S-[QR]-T-P-X-[YQ], motif CTR1 region. The span at 759-790 (RSSTHLRTPMYGSQTPIYGTGSRTPMYGSQTP) shows a compositional bias: polar residues. The CTR1-2; approximate repeat unit spans residues 764–769 (LRTPMY). A CTR1-3 repeat occupies 770–776 (GSQTPIY). Residues Thr-773 and Thr-782 each carry the phosphothreonine; by CDK9 modification. The stretch at 779 to 785 (GSRTPMY) is one CTR1-4 repeat. The CTR1-5 repeat unit spans residues 786-792 (GSQTPLH). The CTR1-6 repeat unit spans residues 794 to 800 (GSRTPHY). One copy of the CTR1-7 repeat lies at 801-807 (GSQTPLH). The stretch at 809-815 (GSRTPGQ) is one CTR1-8 repeat. A compositionally biased stretch (acidic residues) spans 832–842 (DEYEFAYDDEP). The CTR2-1 repeat unit spans residues 842–849 (PSPSPQGY). A 10 X 8 AA approximate tandem repeats of P-[TS]-P-S-P-[QA]-[SG]-Y, motif CTR2 region spans residues 842–948 (PSPSPQGYGG…ASPSPSPVGY (107 aa)). The stretch at 852-860 (TPNPQTPGY) is one CTR2-2; approximate repeat. Over residues 855–864 (PQTPGYPEVP) the composition is skewed to pro residues. Residues 861 to 867 (PEVPSPQ) form a CTR2-3; approximate repeat. Polar residues predominate over residues 866 to 888 (PQVNPQYNPQTPGTPAMYNTDQY). A CTR2-4; half-length repeat occupies 879–883 (TPAMY). The stretch at 894–900 (PSPQGSY) is one CTR2-5; approximate repeat. The span at 894 to 909 (PSPQGSYQPSPSPQSY) shows a compositional bias: low complexity. The stretch at 902–909 (PSPSPQSY) is one CTR2-6 repeat. A CTR2-7; approximate repeat occupies 914-919 (PSPVGY). The CTR2-8 repeat unit spans residues 922–928 (THSPASY). Residues 930–937 (PTPSPMAY) form a CTR2-9 repeat. Residues 941–948 (PSPSPVGY) form a CTR2-10 repeat.

This sequence belongs to the SPT5 family. Interacts with SUPT4H1 to form the DSIF complex. DSIF interacts with RNA polymerase II and with the positive transcription elongation factor b complex (P-TEFb complex), which is composed of CDK9 and cyclin-T. Post-translationally, phosphorylated. Phosphorylation by P-TEFb (CDK9) at Thr residues of the C-terminal repeats alleviates transcriptional pausing and promotes transcription elongation.

It localises to the nucleus. Component of the DRB sensitivity-inducing factor complex (DSIF complex), which regulates mRNA processing and transcription elongation by RNA polymerase II. DSIF positively regulates mRNA capping by stimulating the mRNA guanylyltransferase activity of RNGTT/CAP1A. DSIF also acts cooperatively with the negative elongation factor complex (NELF complex) to enhance transcriptional pausing at sites proximal to the promoter. Transcriptional pausing may facilitate the assembly of an elongation competent RNA polymerase II complex. DSIF and NELF promote pausing by inhibition of the transcription elongation factor TFIIS/S-II. TFIIS/S-II binds to RNA polymerase II at transcription pause sites and stimulates the weak intrinsic nuclease activity of the enzyme. Cleavage of blocked transcripts by RNA polymerase II promotes the resumption of transcription from the new 3' terminus and may allow repeated attempts at transcription through natural pause sites. Following phosphorylation by CDK9, DSIF can also positively regulate transcriptional elongation. Regulation of transcriptional elongation by this protein is required for the expression of genes which control neuronal development. This is Transcription elongation factor SPT5 (supt5h) from Danio rerio (Zebrafish).